Reading from the N-terminus, the 63-residue chain is Large ribosomal subunit protein bL28 (63 aa).

It belongs to the bacterial ribosomal protein bL28 family.

The chain is Large ribosomal subunit protein bL28 from Sulfurihydrogenibium sp. (strain YO3AOP1).